Reading from the N-terminus, the 116-residue chain is Large ribosomal subunit protein uL23 (116 aa).

It belongs to the universal ribosomal protein uL23 family. As to quaternary structure, part of the 50S ribosomal subunit. Contacts protein L29, and trigger factor when it is bound to the ribosome.

One of the early assembly proteins it binds 23S rRNA. One of the proteins that surrounds the polypeptide exit tunnel on the outside of the ribosome. Forms the main docking site for trigger factor binding to the ribosome. The protein is Large ribosomal subunit protein uL23 of Psychrobacter sp. (strain PRwf-1).